A 243-amino-acid polypeptide reads, in one-letter code: Ribosomal RNA small subunit methyltransferase J (243 aa).

Residues 112–113 (ER) and aspartate 164 contribute to the S-adenosyl-L-methionine site.

It belongs to the methyltransferase superfamily. RsmJ family.

It is found in the cytoplasm. The enzyme catalyses guanosine(1516) in 16S rRNA + S-adenosyl-L-methionine = N(2)-methylguanosine(1516) in 16S rRNA + S-adenosyl-L-homocysteine + H(+). Functionally, specifically methylates the guanosine in position 1516 of 16S rRNA. The chain is Ribosomal RNA small subunit methyltransferase J from Legionella pneumophila (strain Lens).